Consider the following 1154-residue polypeptide: Caspase recruitment domain-containing protein 11 (1154 aa).

In terms of domain architecture, CARD spans 18 to 110; the sequence is EEDALWENVE…ELYKLVTGKE (93 aa). The tract at residues 111–128 is linker; sequence PTRRFSTIVVEEGHEGLT. Residues 130-449 are a coiled coil; sequence FLMNEVIKLQ…KDSNNLDQSL (320 aa). 2 positions are modified to phosphoserine: serine 448 and serine 466. The segment at 450–666 is inhibitory domain (ID); the sequence is PRNLPVTIIS…GHVRGPGPSV (217 aa). The interval 460–626 is disordered; the sequence is QDFGDASPRT…HSSSSSHQSE (167 aa). Acidic residues predominate over residues 473–484; that stretch reads EADDSSTSEESP. Serine 512 carries the phosphoserine modification. Basic and acidic residues predominate over residues 518 to 529; that stretch reads RTSDFQAKGHEE. Residues 534 to 562 show a composition bias toward polar residues; it reads ASPSSCGSLPITNSFTKMQPPRSRSSIMS. Serine 535 carries the post-translational modification Phosphoserine. The residue at position 559 (serine 559) is a Phosphoserine; by PKC/PRKCB and PKC/PRKCQ. A compositionally biased stretch (basic and acidic residues) spans 573–587; sequence IVRRYKEDAPHRSTV. Position 593 is a phosphoserine (serine 593). A compositionally biased stretch (low complexity) spans 614–625; sequence SSIHSSSSSHQS. 2 positions are modified to phosphoserine; by PKC/PRKCB and PKC/PRKCQ: serine 644 and serine 652. In terms of domain architecture, PDZ spans 667–755; the sequence is QHTTLNGDSL…PVTLHYKVNH (89 aa). Phosphoserine occurs at positions 886 and 925. The 168-residue stretch at 973 to 1140 folds into the Guanylate kinase-like domain; the sequence is RRRPVLFTPT…LLRVVKDKIG (168 aa).

In terms of assembly, homodimer; disulfide-linked. Homomultimer; polymerizes following activation, forming a nucleating helical template that seeds BCL10-filament formation via a CARD-CARD interaction. Interacts (via CARD domain) with BCL10 (via CARD domain); interaction takes place following CARD11 activation and polymerization, leading to the formation of a filamentous CBM complex assembly. Component of a CBM complex (CARD11-BCL10-MALT1) complex involved in NF-kappa-B activation. Found in a membrane raft complex, at least composed of BCL10, CARD11, DPP4 and IKBKB. Interacts (via PDZ domain) with DPP4 (via cytoplasmic tail). Post-translationally, phosphorylation at Ser-559, Ser-644 and Ser-652 by PRKCB and PRKCQ leads to a shift from an inactive to an active form that activates the NF-kappa-B signaling. Detected in adult peripheral blood leukocytes, thymus, spleen and liver. Also found in promyelocytic leukemia HL-60 cells, chronic myelogenous leukemia K-562 cells, Burkitt's lymphoma Raji cells and colorectal adenocarcinoma SW480 cells. Not detected in HeLaS3, MOLT-4, A-549 and G431 cells.

It is found in the cytoplasm. Its subcellular location is the membrane raft. Its activity is regulated as follows. Maintained in an autoinhibited state via homodimerization in which the CARD domain forms an extensive interaction with the adjacent linker and coiled-coil regions. Activation downstream of T-cell receptor (TCR) by phosphorylation by PRKCB and PRKCQ triggers CARD11 homooligomerization and BCL10 recruitment, followed by activation of NF-kappa-B. In terms of biological role, adapter protein that plays a key role in adaptive immune response by transducing the activation of NF-kappa-B downstream of T-cell receptor (TCR) and B-cell receptor (BCR) engagement. Transduces signals downstream TCR or BCR activation via the formation of a multiprotein complex together with BCL10 and MALT1 that induces NF-kappa-B and MAP kinase p38 (MAPK11, MAPK12, MAPK13 and/or MAPK14) pathways. Upon activation in response to TCR or BCR triggering, CARD11 homooligomerizes to form a nucleating helical template that recruits BCL10 via CARD-CARD interaction, thereby promoting polymerization of BCL10 and subsequent recruitment of MALT1: this leads to I-kappa-B kinase (IKK) phosphorylation and degradation, and release of NF-kappa-B proteins for nuclear translocation. Its binding to DPP4 induces T-cell proliferation and NF-kappa-B activation in a T-cell receptor/CD3-dependent manner. Promotes linear ubiquitination of BCL10 by promoting the targeting of BCL10 to RNF31/HOIP. Stimulates the phosphorylation of BCL10. Also activates the TORC1 signaling pathway. The chain is Caspase recruitment domain-containing protein 11 from Homo sapiens (Human).